The sequence spans 543 residues: ATP synthase subunit alpha (543 aa).

174-181 contacts ATP; that stretch reads GDRQTGKT. The tract at residues 521 to 543 is disordered; it reads VEKKPDVDKAAPVDQEKIVAGEK.

It belongs to the ATPase alpha/beta chains family. F-type ATPases have 2 components, CF(1) - the catalytic core - and CF(0) - the membrane proton channel. CF(1) has five subunits: alpha(3), beta(3), gamma(1), delta(1), epsilon(1). CF(0) has three main subunits: a(1), b(2) and c(9-12). The alpha and beta chains form an alternating ring which encloses part of the gamma chain. CF(1) is attached to CF(0) by a central stalk formed by the gamma and epsilon chains, while a peripheral stalk is formed by the delta and b chains.

It localises to the cell membrane. It catalyses the reaction ATP + H2O + 4 H(+)(in) = ADP + phosphate + 5 H(+)(out). Its function is as follows. Produces ATP from ADP in the presence of a proton gradient across the membrane. The alpha chain is a regulatory subunit. This Bifidobacterium longum (strain DJO10A) protein is ATP synthase subunit alpha.